Reading from the N-terminus, the 327-residue chain is Acetyl-coenzyme A carboxylase carboxyl transferase subunit beta (327 aa).

Residues 24-293 enclose the CoA carboxyltransferase N-terminal domain; it reads LWIKCPDTGQ…LTVTTAVEAP (270 aa). Residues 293–311 are compositionally biased toward low complexity; the sequence is PAEAAAKAEPEATTTEQPV. The tract at residues 293–327 is disordered; sequence PAEAAAKAEPEATTTEQPVAPAPTEPPAQPAAPQA. Positions 312–327 are enriched in pro residues; sequence APAPTEPPAQPAAPQA.

It belongs to the AccD/PCCB family. As to quaternary structure, acetyl-CoA carboxylase is a heterohexamer composed of biotin carboxyl carrier protein (AccB), biotin carboxylase (AccC) and two subunits each of ACCase subunit alpha (AccA) and ACCase subunit beta (AccD).

Its subcellular location is the cytoplasm. It catalyses the reaction N(6)-carboxybiotinyl-L-lysyl-[protein] + acetyl-CoA = N(6)-biotinyl-L-lysyl-[protein] + malonyl-CoA. It functions in the pathway lipid metabolism; malonyl-CoA biosynthesis; malonyl-CoA from acetyl-CoA: step 1/1. Component of the acetyl coenzyme A carboxylase (ACC) complex. Biotin carboxylase (BC) catalyzes the carboxylation of biotin on its carrier protein (BCCP) and then the CO(2) group is transferred by the transcarboxylase to acetyl-CoA to form malonyl-CoA. This chain is Acetyl-coenzyme A carboxylase carboxyl transferase subunit beta, found in Rhodopseudomonas palustris (strain TIE-1).